We begin with the raw amino-acid sequence, 157 residues long: Endoribonuclease YbeY (157 aa).

3 residues coordinate Zn(2+): H114, H118, and H124.

Belongs to the endoribonuclease YbeY family. Zn(2+) is required as a cofactor.

It localises to the cytoplasm. In terms of biological role, single strand-specific metallo-endoribonuclease involved in late-stage 70S ribosome quality control and in maturation of the 3' terminus of the 16S rRNA. The chain is Endoribonuclease YbeY from Yersinia pseudotuberculosis serotype O:3 (strain YPIII).